Reading from the N-terminus, the 713-residue chain is Undecaprenyl-diphosphooligosaccharide--protein glycotransferase (713 aa).

The Cytoplasmic segment spans residues 1–11 (MLKKEYLKNPY). Residues 12–35 (LVLFAMIILAYVFSVLCRFYWIWW) traverse the membrane as a helical segment. The Periplasmic portion of the chain corresponds to 36 to 96 (ASEFNEYFFN…YWLYKITPFS (61 aa)). Residues 52–54 (SND) carry the DXD motif 1 motif. Asp54 serves as a coordination point for Mn(2+). Residues 97-122 (FESIILYMSTFLSSLVVIPIILLANE) form a helical membrane-spanning segment. Residues 123 to 125 (YKR) are Cytoplasmic-facing. Residues 126–144 (PLMGFVAALLASVANSYYN) traverse the membrane as a helical segment. Topologically, residues 145-152 (RTMSGYYD) are periplasmic. Residue Asp152 participates in Mn(2+) binding. The DXD motif 2 motif lies at 152–154 (DTD). The helical transmembrane segment at 153–174 (TDMLVIVLPMFILFFMVRMILK) threads the bilayer. The Cytoplasmic segment spans residues 175-176 (KD). Residues 177–192 (FFSLIALPLFIGIYLW) form a helical membrane-spanning segment. The Periplasmic segment spans residues 193–197 (WYPSS). 194–196 (YPS) contributes to the [alpha-D-GalNAc-(1-&gt;4)]2-[beta-D-Glc-(1-&gt;3)]-[alpha-D-GalNAc-(1-&gt;4)]2-alpha-D-GalNAc-(1-&gt;3)-alpha-D-diNAcBac-tri-trans,hepta-cis-undecaprenyl diphosphate binding site. Residues 198–215 (YTLNVALIGLFLIYTLIF) form a helical membrane-spanning segment. Topologically, residues 216–220 (HRKEK) are cytoplasmic. Residues 221–233 (IFYIAVILSSLTL) traverse the membrane as a helical segment. Topologically, residues 234–237 (SNIA) are periplasmic. The chain crosses the membrane as a helical span at residues 238-254 (WFYQSAIIVILFALFAL). Residues 255–260 (EQKRLN) lie on the Cytoplasmic side of the membrane. Residues 261 to 278 (FMIIGILGSATLIFLILS) traverse the membrane as a helical segment. The Periplasmic segment spans residues 279-324 (GGVDPILYQLKFYIFRNDESANLTQGFMYFNVNQTIQEVENVDFSE). Residue Tyr291 participates in [alpha-D-GalNAc-(1-&gt;4)]2-[beta-D-Glc-(1-&gt;3)]-[alpha-D-GalNAc-(1-&gt;4)]2-alpha-D-GalNAc-(1-&gt;3)-alpha-D-diNAcBac-tri-trans,hepta-cis-undecaprenyl diphosphate binding. The short motif at 313–316 (TIQE) is the TIXE motif element. Glu316 provides a ligand contact to Mn(2+). The helical transmembrane segment at 325–347 (FMRRISGSEIVFLFSLFGFVWLL) threads the bilayer. Over 348–352 (RKHKS) the chain is Cytoplasmic. The chain crosses the membrane as a helical span at residues 353-369 (MIMALPILVLGFLALKG). Topologically, residues 370–373 (GLRF) are periplasmic. Arg372 contacts [alpha-D-GalNAc-(1-&gt;4)]2-[beta-D-Glc-(1-&gt;3)]-[alpha-D-GalNAc-(1-&gt;4)]2-alpha-D-GalNAc-(1-&gt;3)-alpha-D-diNAcBac-tri-trans,hepta-cis-undecaprenyl diphosphate. The chain crosses the membrane as a helical span at residues 374 to 396 (TIYSVPVMALGFGFLLSEFKAIL). The Cytoplasmic portion of the chain corresponds to 397–406 (VKKYSQLTSN). A helical transmembrane segment spans residues 407-427 (VCIVFATILTLAPVFIHIYNY). At 428–713 (KAPTVFSQNE…RDAKVFKLKI (286 aa)) the chain is on the periplasmic side. The interval 457 to 459 (WWD) is interacts with target acceptor peptide in protein substrate. A WWDYG motif motif is present at residues 457 to 461 (WWDYG). Tyr462 contacts [alpha-D-GalNAc-(1-&gt;4)]2-[beta-D-Glc-(1-&gt;3)]-[alpha-D-GalNAc-(1-&gt;4)]2-alpha-D-GalNAc-(1-&gt;3)-alpha-D-diNAcBac-tri-trans,hepta-cis-undecaprenyl diphosphate. Asn534 is a glycosylation site (N-linked (DATDGlc) asparagine). An MI motif motif is present at residues 568–575 (MSLIFSTV).

This sequence belongs to the STT3 family. Requires Mg(2+) as cofactor. Mn(2+) serves as cofactor.

It is found in the cell inner membrane. It carries out the reaction tritrans,heptacis-undecaprenyl diphosphooligosaccharide + [protein]-L-asparagine = tritrans,heptacis-undecaprenyl diphosphate + a glycoprotein with the oligosaccharide chain attached by N-beta-D-glycosyl linkage to protein L-asparagine.. Its pathway is protein modification; protein glycosylation. Functionally, oligosaccharyltransferase that catalyzes the transfer of a preassembled heptasaccharide from a lipid donor to an asparagine residue in nascent polypeptide chains, affording a beta-linked glycan to the asparagine side chain of target proteins. In terms of biological role, oligosaccharyl transferase (OST) that catalyzes the initial transfer of a defined glycan (GalNAc(2)GlcGalNAc(3)Bac(NAc)(2) in eubacteria, where Bac(NAc)(2) is di-N-acetyl bacillosamine) from the lipid carrier undecaprenol-pyrophosphate to an asparagine residue within an Asp/Glu-Asn-X-Ser/Thr consensus motif in nascent polypeptide chains, the first step in protein N-glycosylation. The chain is Undecaprenyl-diphosphooligosaccharide--protein glycotransferase (pglB) from Campylobacter jejuni (strain RM1221).